Reading from the N-terminus, the 1307-residue chain is Contactin-associated protein like 5-3 (1307 aa).

A signal peptide spans 1–24 (MDFVPRLNSVLTLVLSGLWHFGLT). The Extracellular portion of the chain corresponds to 25–1238 (ATNCDNCDDP…PLTNAVLSDS (1214 aa)). Residues 31–175 (CDDPLASFLS…IGMRMEVYGC (145 aa)) enclose the F5/8 type C domain. Cysteine 31 and cysteine 175 are oxidised to a cystine. Laminin G-like domains follow at residues 181–361 (VADF…TFSC) and 368–545 (PITF…IDLC). The N-linked (GlcNAc...) asparagine glycan is linked to asparagine 283. Cysteine 330 and cysteine 361 are joined by a disulfide. N-linked (GlcNAc...) asparagine glycosylation is present at asparagine 497. Intrachain disulfides connect cysteine 513–cysteine 545, cysteine 551–cysteine 562, cysteine 556–cysteine 571, and cysteine 573–cysteine 583. Positions 547 to 584 (IKDRCLPNYCEHGGHCVQTWTTFYCNCSNTGYTGATCH) constitute an EGF-like 1 domain. A Fibrinogen C-terminal domain is found at 585–792 (DSIYEQSCEV…LRCYGDRHFW (208 aa)). Residues asparagine 600, asparagine 624, and asparagine 637 are each glycosylated (N-linked (GlcNAc...) asparagine). The Laminin G-like 3 domain maps to 793-958 (NAVSFSTEAS…MVTSGVRPGC (166 aa)). Cystine bridges form between cysteine 931-cysteine 958, cysteine 962-cysteine 975, cysteine 969-cysteine 984, cysteine 986-cysteine 996, and cysteine 1165-cysteine 1200. The 39-residue stretch at 959–997 (PGHCSSYGNNCHNGGKCVEKHNSYSCDCTKSPYEGPFCQ) folds into the EGF-like 2 domain. A Laminin G-like 4 domain is found at 1019–1200 (PVSKNTSTSS…VQGSLREFSC (182 aa)). Residues 1239–1259 (AVIGGVIAVVTFITFCVIGIM) form a helical membrane-spanning segment. Residues 1260-1307 (TRFLYQHKQSHCTSQKKEKEYSENLDSSFRHDIDLQSTTSKCKREYFI) lie on the Cytoplasmic side of the membrane.

Belongs to the neurexin family.

It is found in the membrane. Functionally, may play a role in the correct development and proper functioning of the peripheral and central nervous system and be involved in cell adhesion and intercellular communication. This Rattus norvegicus (Rat) protein is Contactin-associated protein like 5-3 (Cntnap5c).